The primary structure comprises 486 residues: Cardiolipin synthase A (486 aa).

Helical transmembrane passes span 3-23 and 38-58; these read TFYT…IAGV and MAWL…YLSF. 2 PLD phosphodiesterase domains span residues 219-246 and 399-426; these read MDLR…VDPR and EGGL…DMRS. Active-site residues include H224, K226, D231, H404, K406, and D411.

Belongs to the phospholipase D family. Cardiolipin synthase subfamily. ClsA sub-subfamily.

It is found in the cell inner membrane. It catalyses the reaction 2 a 1,2-diacyl-sn-glycero-3-phospho-(1'-sn-glycerol) = a cardiolipin + glycerol. Functionally, catalyzes the reversible phosphatidyl group transfer from one phosphatidylglycerol molecule to another to form cardiolipin (CL) (diphosphatidylglycerol) and glycerol. The sequence is that of Cardiolipin synthase A from Klebsiella pneumoniae (strain 342).